The primary structure comprises 845 residues: MELWRQCTHWLIQCRVLPPSHRVTWDGAQVCELAQALRDGVLLCQLLNNLLPHAINLREVNLRPQMSQFLCLKNIRTFLSTCCEKFGLKRSELFEAFDLFDVQDFGKVIYTLSALSWTPIAQNRGIMPFPTEEESVGDEDIYSGLSDQIDDTVEEDEDLYDCVENEEAEGDEIYEDLMRSEPVSMPPKMTEYDKRCCCLREIQQTEEKYTDTLGSIQQHFLKPLQRFLKPQDIEIIFINIEDLLRVHTHFLKEMKEALGTPGAANLYQVFIKYKERFLVYGRYCSQVESASKHLDRVAAAREDVQMKLEECSQRANNGRFTLRDLLMVPMQRVLKYHLLLQELVKHTQEAMEKENLRLALDAMRDLAQCVNEVKRDNETLRQITNFQLSIENLDQSLAHYGRPKIDGELKITSVERRSKMDRYAFLLDKALLICKRRGDSYDLKDFVNLHSFQVRDDSSGDRDNKKWSHMFLLIEDQGAQGYELFFKTRELKKKWMEQFEMAISNIYPENATANGHDFQMFSFEETTSCKACQMLLRGTFYQGYRCHRCRASAHKECLGRVPPCGRHGQDFPGTMKKDKLHRRAQDKKRNELGLPKMEVFQEYYGLPPPPGAIGPFLRLNPGDIVELTKAEAEQNWWEGRNTSTNEIGWFPCNRVKPYVHGPPQDLSVHLWYAGPMERAGAESILANRSDGTFLVRQRVKDAAEFAISIKYNVEVKHIKIMTAEGLYRITEKKAFRGLTELVEFYQQNSLKDCFKSLDTTLQFPFKEPEKRTISRPAVGSTKYFGTAKARYDFCARDRSELSLKEGDIIKILNKKGQQGWWRGEIYGRVGWFPANYVEEDYSEYC.

The Calponin-homology (CH) domain occupies M1–P119. Residues K194–V373 enclose the DH domain. The PH domain occupies R402–S504. A Phorbol-ester/DAG-type zinc finger spans residues G515–C564. An SH3 1 domain is found at L592 to H660. One can recognise an SH2 domain in the interval W671–F765. The SH3 2 domain maps to K782–S842. Phosphotyrosine is present on residues Y826 and Y844.

As to quaternary structure, interacts with SHB. Interacts with SH2B2, GRB2, GRB3, DOCK2, SLA, TEC and ZNF655/VIK. Interacts with SIAH2; without leading to its degradation. Associates with BLNK, PLCG1, GRB2 and NCK1 in a B-cell antigen receptor-dependent fashion. Interacts with CBLB; which inhibits tyrosine phosphorylation and down-regulates activity. May interact with CCPG1. Interacts with CLNK. Interacts with THEMIS2. Interacts with NEK3 and this interaction is prolactin-dependent. Interacts with ITK. Interacts with PTK2B/PYK2. Interacts with HCK. Interacts with PTK2B/PYK2. Interacts (via SH2 domain) with SYK. Interacts with ANKRD54. Interacts with CD6. Interacts with isoform 2 of CRACR2A. Interacts with LCP2; this interaction plays a role in TCR-mediated cytokine production. In terms of processing, phosphorylated on tyrosine residues by HCK in response to IFNG and bacterial lipopolysaccharide (LPS). Phosphorylated by FYN. As to expression, widely expressed in hematopoietic cells but not in other cell types.

Functionally, couples tyrosine kinase signals with the activation of the Rho/Rac GTPases, thus leading to cell differentiation and/or proliferation. The polypeptide is Proto-oncogene vav (VAV1) (Homo sapiens (Human)).